We begin with the raw amino-acid sequence, 329 residues long: MTWRDEIARRVRGEHLRDAPLAPRTAVRVGGPADLLCRPADGDALSALLRAVRELGVPLSVLGGGANTLVADAGVRGVVLRLPQEFPGESTDGDTLVLSAGAPISRLPARAHAHGLVGMEFLGGIPGTLGGAAAMNAGTRLGEMKDVVTRLELATPDGTGFVPASALGYAYRTCRLPPGAVIARVEVRLHPGDVAASEALMREDRERRRATQPLYRPTFGSTFTNPPGEYAGRLVEAVGLKGHRVGNAIWSPVHANFVTNLGGATARDVLALVRLARARVQERFGIALETEVRLLGEFLEEDLEGLDGHAAAGGGPGAASGGVRPPEAT.

The 165-residue stretch at 28–192 (RVGGPADLLC…ARVEVRLHPG (165 aa)) folds into the FAD-binding PCMH-type domain. Arg-172 is a catalytic residue. Residue Ser-221 is the Proton donor of the active site. Residue Glu-291 is part of the active site. Positions 307 to 329 (DGHAAAGGGPGAASGGVRPPEAT) are disordered. Positions 311–320 (AAGGGPGAAS) are enriched in gly residues.

The protein belongs to the MurB family. FAD is required as a cofactor.

It localises to the cytoplasm. The catalysed reaction is UDP-N-acetyl-alpha-D-muramate + NADP(+) = UDP-N-acetyl-3-O-(1-carboxyvinyl)-alpha-D-glucosamine + NADPH + H(+). It functions in the pathway cell wall biogenesis; peptidoglycan biosynthesis. Its function is as follows. Cell wall formation. This is UDP-N-acetylenolpyruvoylglucosamine reductase from Anaeromyxobacter dehalogenans (strain 2CP-1 / ATCC BAA-258).